Reading from the N-terminus, the 38-residue chain is Large ribosomal subunit protein bL36 (38 aa).

It belongs to the bacterial ribosomal protein bL36 family.

The sequence is that of Large ribosomal subunit protein bL36 from Acholeplasma laidlawii (strain PG-8A).